Consider the following 121-residue polypeptide: MAELNVEIVAVDRKIWSGAGTFLFTRTTVGEIGILPNHIPLVAQLVDDAMVRVERDGDKDLRIAVDGGFMSVTDAGVSILAESAEFESEIDEAVARQDSESDDPRTAARGRARLRAVGAID.

The protein belongs to the ATPase epsilon chain family. F-type ATPases have 2 components, CF(1) - the catalytic core - and CF(0) - the membrane proton channel. CF(1) has five subunits: alpha(3), beta(3), gamma(1), delta(1), epsilon(1). CF(0) has three main subunits: a, b and c.

The protein localises to the cell membrane. In terms of biological role, produces ATP from ADP in the presence of a proton gradient across the membrane. This is ATP synthase epsilon chain from Mycobacterium marinum (strain ATCC BAA-535 / M).